Consider the following 347-residue polypeptide: NADH-ubiquinone oxidoreductase chain 2 (347 aa).

Helical transmembrane passes span 3 to 23 (PPIL…VLTS), 25 to 45 (HWLL…PILM), 60 to 80 (FLTQ…NLMF), 96 to 116 (GLVT…FWVP), 122 to 142 (ISLS…LSIL), 153 to 173 (LLIT…LNQT), 178 to 198 (ILAY…TYNP), 200 to 220 (LMIL…MLFM), 237 to 257 (LPLM…LPPL), 274 to 294 (DMII…YFYM), and 323 to 343 (IILL…TPMM).

This sequence belongs to the complex I subunit 2 family. Core subunit of respiratory chain NADH dehydrogenase (Complex I) which is composed of 45 different subunits. Interacts with TMEM242.

The protein localises to the mitochondrion inner membrane. It carries out the reaction a ubiquinone + NADH + 5 H(+)(in) = a ubiquinol + NAD(+) + 4 H(+)(out). Functionally, core subunit of the mitochondrial membrane respiratory chain NADH dehydrogenase (Complex I) which catalyzes electron transfer from NADH through the respiratory chain, using ubiquinone as an electron acceptor. Essential for the catalytic activity and assembly of complex I. This is NADH-ubiquinone oxidoreductase chain 2 from Halichoerus grypus (Gray seal).